Here is a 205-residue protein sequence, read N- to C-terminus: Small ribosomal subunit protein uS4 (205 aa).

The segment covering 1 to 16 (MSKRESSKYKIDRRMG) has biased composition (basic and acidic residues). Positions 1-46 (MSKRESSKYKIDRRMGENIWGRPKSPVNRREYGPGQHGQRRKSKLS) are disordered. Positions 94-157 (SRLDAIVYRA…KQLVTVLEAV (64 aa)) constitute an S4 RNA-binding domain.

It belongs to the universal ribosomal protein uS4 family. In terms of assembly, part of the 30S ribosomal subunit. Contacts protein S5. The interaction surface between S4 and S5 is involved in control of translational fidelity.

In terms of biological role, one of the primary rRNA binding proteins, it binds directly to 16S rRNA where it nucleates assembly of the body of the 30S subunit. Its function is as follows. With S5 and S12 plays an important role in translational accuracy. This chain is Small ribosomal subunit protein uS4, found in Rhizobium meliloti (strain 1021) (Ensifer meliloti).